The sequence spans 512 residues: Sporulation-regulated protein 3 (512 aa).

The segment at 31–68 is disordered; that stretch reads RQSSQGQYAVDSHPPKSPELKHRRQRSSSFVNGKCRNR. A Septin-type G domain is found at 106–365; it reads NGIDFTLMVA…EKCRSEMLRT (260 aa). A G1 motif region spans residues 116–123; sequence GQSGLGKT. GTP is bound by residues 116–123, Gly-168, 247–255, and Arg-315; these read GQSGLGKT and KSDLLTKEE. The segment at 165–168 is G3 motif; sequence DTPG. The G4 motif stretch occupies residues 246–249; the sequence is AKSD. Coiled coils occupy residues 376 to 406 and 451 to 496; these read TKSV…LKNY and RDWK…KSSN.

Belongs to the TRAFAC class TrmE-Era-EngA-EngB-Septin-like GTPase superfamily. Septin GTPase family. Interacts with other septin proteins such as SPR28 to form a ring at the bud neck.

The protein localises to the prospore membrane. The protein resides in the bud neck. Functionally, septins are GTPases involved in cytokinesis that assemble into filaments and form a ring at the cleavage site. May act by recruiting MYO1 and HOF1, a protein involved in septation, to the site of cleavage. Septins are also involved in cell morphogenesis, bud site selection, chitin deposition, cell cycle regulation, cell compartmentalization and spore wall formation. In Saccharomyces cerevisiae (strain ATCC 204508 / S288c) (Baker's yeast), this protein is Sporulation-regulated protein 3 (SPR3).